Reading from the N-terminus, the 158-residue chain is Transcriptional repressor NrdR (158 aa).

The segment at 3–34 (CPYCGFEESKVVDSRSTEDHKAIRRRRECLKC) is a zinc-finger region. The region spanning 49–139 (VLVIKRDSNR…VYRQFKDINT (91 aa)) is the ATP-cone domain.

The protein belongs to the NrdR family. Zn(2+) serves as cofactor.

In terms of biological role, negatively regulates transcription of bacterial ribonucleotide reductase nrd genes and operons by binding to NrdR-boxes. This Clostridium novyi (strain NT) protein is Transcriptional repressor NrdR.